A 192-amino-acid chain; its full sequence is dTTP/UTP pyrophosphatase (192 aa).

Asp-72 serves as the catalytic Proton acceptor.

It belongs to the Maf family. YhdE subfamily. A divalent metal cation serves as cofactor.

The protein localises to the cytoplasm. The enzyme catalyses dTTP + H2O = dTMP + diphosphate + H(+). The catalysed reaction is UTP + H2O = UMP + diphosphate + H(+). Functionally, nucleoside triphosphate pyrophosphatase that hydrolyzes dTTP and UTP. May have a dual role in cell division arrest and in preventing the incorporation of modified nucleotides into cellular nucleic acids. The chain is dTTP/UTP pyrophosphatase from Hydrogenovibrio crunogenus (strain DSM 25203 / XCL-2) (Thiomicrospira crunogena).